Here is a 430-residue protein sequence, read N- to C-terminus: Asparagine--tRNA ligase (430 aa).

The protein belongs to the class-II aminoacyl-tRNA synthetase family. In terms of assembly, homodimer.

The protein resides in the cytoplasm. It catalyses the reaction tRNA(Asn) + L-asparagine + ATP = L-asparaginyl-tRNA(Asn) + AMP + diphosphate + H(+). The polypeptide is Asparagine--tRNA ligase (Listeria monocytogenes serovar 1/2a (strain ATCC BAA-679 / EGD-e)).